Reading from the N-terminus, the 375-residue chain is B3 domain-containing protein REM-like 2 (375 aa).

3 consecutive DNA-binding regions (TF-B3) follow at residues 51–147 (SFVA…KRLY), 131–226 (FVTV…YGTN), and 277–375 (RLVI…KSGK).

Its subcellular location is the nucleus. In Arabidopsis thaliana (Mouse-ear cress), this protein is B3 domain-containing protein REM-like 2.